A 507-amino-acid chain; its full sequence is Chromosomal replication initiator protein DnaA (507 aa).

The tract at residues 1–72 is domain I, interacts with DnaA modulators; that stretch reads MNNYNKIWEI…KKITKLKFEE (72 aa). The domain II stretch occupies residues 72 to 162; the sequence is EKIIIEFVSE…KISFNKYNYG (91 aa). Positions 163–384 are domain III, AAA+ region; that stretch reads NTNPKYSFDN…GALLRLLNYA (222 aa). Positions 207, 209, 210, and 211 each coordinate ATP. The tract at residues 385–507 is domain IV, binds dsDNA; it reads QTFGYDIDIN…LELILKKINS (123 aa).

This sequence belongs to the DnaA family. As to quaternary structure, oligomerizes as a right-handed, spiral filament on DNA at oriC.

The protein localises to the cytoplasm. Plays an essential role in the initiation and regulation of chromosomal replication. ATP-DnaA binds to the origin of replication (oriC) to initiate formation of the DNA replication initiation complex once per cell cycle. Binds the DnaA box (a 9 base pair repeat at the origin) and separates the double-stranded (ds)DNA. Forms a right-handed helical filament on oriC DNA; dsDNA binds to the exterior of the filament while single-stranded (ss)DNA is stabiized in the filament's interior. The ATP-DnaA-oriC complex binds and stabilizes one strand of the AT-rich DNA unwinding element (DUE), permitting loading of DNA polymerase. After initiation quickly degrades to an ADP-DnaA complex that is not apt for DNA replication. Binds acidic phospholipids. This Onion yellows phytoplasma (strain OY-M) protein is Chromosomal replication initiator protein DnaA.